The chain runs to 219 residues: Kynurenine formamidase (219 aa).

Tryptophan 28 is a binding site for substrate. Zn(2+)-binding residues include histidine 58, histidine 62, and aspartate 64. Histidine 68 functions as the Proton donor/acceptor in the catalytic mechanism. Zn(2+)-binding residues include histidine 170 and glutamate 182.

The protein belongs to the Cyclase 1 superfamily. KynB family. Homodimer. Zn(2+) serves as cofactor.

It catalyses the reaction N-formyl-L-kynurenine + H2O = L-kynurenine + formate + H(+). The protein operates within amino-acid degradation; L-tryptophan degradation via kynurenine pathway; L-kynurenine from L-tryptophan: step 2/2. In terms of biological role, catalyzes the hydrolysis of N-formyl-L-kynurenine to L-kynurenine, the second step in the kynurenine pathway of tryptophan degradation. The sequence is that of Kynurenine formamidase from Cupriavidus pinatubonensis (strain JMP 134 / LMG 1197) (Cupriavidus necator (strain JMP 134)).